The sequence spans 220 residues: Large ribosomal subunit protein uL3 (220 aa).

The segment at 132–153 (SGRASHGNSRSHNVPGSIGMAQ) is disordered. Residues 133-145 (GRASHGNSRSHNV) are compositionally biased toward polar residues. An N5-methylglutamine modification is found at Gln-153.

The protein belongs to the universal ribosomal protein uL3 family. As to quaternary structure, part of the 50S ribosomal subunit. Forms a cluster with proteins L14 and L19. Post-translationally, methylated by PrmB.

One of the primary rRNA binding proteins, it binds directly near the 3'-end of the 23S rRNA, where it nucleates assembly of the 50S subunit. This chain is Large ribosomal subunit protein uL3, found in Ralstonia nicotianae (strain ATCC BAA-1114 / GMI1000) (Ralstonia solanacearum).